The sequence spans 497 residues: UDP-N-acetylmuramoyl-L-alanyl-D-glutamate--2,6-diaminopimelate ligase (497 aa).

Ser29 lines the UDP-N-acetyl-alpha-D-muramoyl-L-alanyl-D-glutamate pocket. 116–122 (GTNGKTT) lines the ATP pocket. Residues Asn157, 158–159 (TT), Ser185, Gln191, and Arg193 each bind UDP-N-acetyl-alpha-D-muramoyl-L-alanyl-D-glutamate. Position 225 is an N6-carboxylysine (Lys225). Meso-2,6-diaminopimelate-binding positions include Arg392, 416–419 (DNPR), Gly467, and Glu471. The Meso-diaminopimelate recognition motif signature appears at 416 to 419 (DNPR).

Belongs to the MurCDEF family. MurE subfamily. Mg(2+) serves as cofactor. Post-translationally, carboxylation is probably crucial for Mg(2+) binding and, consequently, for the gamma-phosphate positioning of ATP.

The protein localises to the cytoplasm. It catalyses the reaction UDP-N-acetyl-alpha-D-muramoyl-L-alanyl-D-glutamate + meso-2,6-diaminopimelate + ATP = UDP-N-acetyl-alpha-D-muramoyl-L-alanyl-gamma-D-glutamyl-meso-2,6-diaminopimelate + ADP + phosphate + H(+). It participates in cell wall biogenesis; peptidoglycan biosynthesis. Functionally, catalyzes the addition of meso-diaminopimelic acid to the nucleotide precursor UDP-N-acetylmuramoyl-L-alanyl-D-glutamate (UMAG) in the biosynthesis of bacterial cell-wall peptidoglycan. In Buchnera aphidicola subsp. Acyrthosiphon pisum (strain APS) (Acyrthosiphon pisum symbiotic bacterium), this protein is UDP-N-acetylmuramoyl-L-alanyl-D-glutamate--2,6-diaminopimelate ligase.